The following is a 177-amino-acid chain: Photosystem I assembly protein Ycf4 (177 aa).

2 helical membrane passes run 20–40 (VALL…SSYF) and 60–80 (LVMG…WAVI).

It belongs to the Ycf4 family.

It localises to the cellular thylakoid membrane. In terms of biological role, seems to be required for the assembly of the photosystem I complex. In Synechococcus sp. (strain RCC307), this protein is Photosystem I assembly protein Ycf4.